A 74-amino-acid chain; its full sequence is Large ribosomal subunit protein bL28 (74 aa).

Belongs to the bacterial ribosomal protein bL28 family.

The sequence is that of Large ribosomal subunit protein bL28 from Buchnera aphidicola subsp. Baizongia pistaciae (strain Bp).